A 509-amino-acid polypeptide reads, in one-letter code: ATP synthase subunit alpha (509 aa).

169–176 serves as a coordination point for ATP; the sequence is GDRQTGKT.

The protein belongs to the ATPase alpha/beta chains family. F-type ATPases have 2 components, CF(1) - the catalytic core - and CF(0) - the membrane proton channel. CF(1) has five subunits: alpha(3), beta(3), gamma(1), delta(1), epsilon(1). CF(0) has four main subunits: a(1), b(1), b'(1) and c(9-12).

The protein localises to the cell inner membrane. It carries out the reaction ATP + H2O + 4 H(+)(in) = ADP + phosphate + 5 H(+)(out). In terms of biological role, produces ATP from ADP in the presence of a proton gradient across the membrane. The alpha chain is a regulatory subunit. The protein is ATP synthase subunit alpha of Bradyrhizobium sp. (strain ORS 278).